Here is a 558-residue protein sequence, read N- to C-terminus: CTP synthase (558 aa).

The segment at 1-267 is amidoligase domain; the sequence is MAKFVFVTGG…CLEMLDVLNL (267 aa). Ser13 provides a ligand contact to CTP. Position 13 (Ser13) interacts with UTP. ATP-binding positions include 14–19 and Asp71; that span reads SIGKGI. Positions 71 and 141 each coordinate Mg(2+). Residues 148–150, 188–193, and Lys224 contribute to the CTP site; these read DIE and KTKPTQ. Residues 188 to 193 and Lys224 contribute to the UTP site; that span reads KTKPTQ. Residues 292 to 534 form the Glutamine amidotransferase type-1 domain; it reads KVALVGKYVQ…IEAAQLRLPA (243 aa). L-glutamine is bound at residue Gly354. The active-site Nucleophile; for glutamine hydrolysis is Cys381. L-glutamine contacts are provided by residues 382–385, Glu405, and Arg462; that span reads LGMQ. Residues His507 and Glu509 contribute to the active site. Residues 536–558 form a disordered region; that stretch reads PDEALRRQSQTNISAQEKPSRIG. Polar residues predominate over residues 542-552; the sequence is RQSQTNISAQE.

Belongs to the CTP synthase family. As to quaternary structure, homotetramer.

It carries out the reaction UTP + L-glutamine + ATP + H2O = CTP + L-glutamate + ADP + phosphate + 2 H(+). The enzyme catalyses L-glutamine + H2O = L-glutamate + NH4(+). The catalysed reaction is UTP + NH4(+) + ATP = CTP + ADP + phosphate + 2 H(+). Its pathway is pyrimidine metabolism; CTP biosynthesis via de novo pathway; CTP from UDP: step 2/2. With respect to regulation, allosterically activated by GTP, when glutamine is the substrate; GTP has no effect on the reaction when ammonia is the substrate. The allosteric effector GTP functions by stabilizing the protein conformation that binds the tetrahedral intermediate(s) formed during glutamine hydrolysis. Inhibited by the product CTP, via allosteric rather than competitive inhibition. Its function is as follows. Catalyzes the ATP-dependent amination of UTP to CTP with either L-glutamine or ammonia as the source of nitrogen. Regulates intracellular CTP levels through interactions with the four ribonucleotide triphosphates. In Prochlorococcus marinus (strain MIT 9303), this protein is CTP synthase.